A 228-amino-acid polypeptide reads, in one-letter code: UPF0173 metal-dependent hydrolase Tpen_1493 (228 aa).

It belongs to the UPF0173 family.

The polypeptide is UPF0173 metal-dependent hydrolase Tpen_1493 (Thermofilum pendens (strain DSM 2475 / Hrk 5)).